The chain runs to 156 residues: NAD(P)H-quinone oxidoreductase subunit N (156 aa).

It belongs to the complex I NdhN subunit family. In terms of assembly, NDH-1 can be composed of about 15 different subunits; different subcomplexes with different compositions have been identified which probably have different functions.

It localises to the cellular thylakoid membrane. The enzyme catalyses a plastoquinone + NADH + (n+1) H(+)(in) = a plastoquinol + NAD(+) + n H(+)(out). The catalysed reaction is a plastoquinone + NADPH + (n+1) H(+)(in) = a plastoquinol + NADP(+) + n H(+)(out). Its function is as follows. NDH-1 shuttles electrons from an unknown electron donor, via FMN and iron-sulfur (Fe-S) centers, to quinones in the respiratory and/or the photosynthetic chain. The immediate electron acceptor for the enzyme in this species is believed to be plastoquinone. Couples the redox reaction to proton translocation, and thus conserves the redox energy in a proton gradient. Cyanobacterial NDH-1 also plays a role in inorganic carbon-concentration. This chain is NAD(P)H-quinone oxidoreductase subunit N, found in Prochlorococcus marinus (strain MIT 9515).